The primary structure comprises 400 residues: Enoyl-[acyl-carrier-protein] reductase [NADH] (400 aa).

Residues 48-53, 74-75, 111-112, and 139-140 each bind NAD(+); these read GSSSGY, FE, DA, and LA. Y225 contacts substrate. Catalysis depends on Y235, which acts as the Proton donor. Residues K244 and 273–275 each bind NAD(+); that span reads VVT.

Belongs to the TER reductase family. Monomer.

The enzyme catalyses a 2,3-saturated acyl-[ACP] + NAD(+) = a (2E)-enoyl-[ACP] + NADH + H(+). The protein operates within lipid metabolism; fatty acid biosynthesis. In terms of biological role, involved in the final reduction of the elongation cycle of fatty acid synthesis (FAS II). Catalyzes the reduction of a carbon-carbon double bond in an enoyl moiety that is covalently linked to an acyl carrier protein (ACP). This chain is Enoyl-[acyl-carrier-protein] reductase [NADH], found in Shewanella baltica (strain OS223).